We begin with the raw amino-acid sequence, 252 residues long: MKTVTVKDLVIGAGAPKIIVSLMAKDIARVKSEALAYREADFDILEWRVDHFADLSNVESVMAAAKILRETMPEKPLLFTFRSAKEGGEQAISTEAYIALNRAAIDSGLVDMIDLELFTGDDQVKETVAYAHAHDVKVVMSNHDFHKTPEAEEIIARLRKMQSFDADIPKIALMPQSTSDVLTLLAATLEMQEQYADRPIITMSMAKTGVISRLVGEVFGSAATFGAVKKASAPGQISVNDLRTVLTILHQA.

3-dehydroquinate contacts are provided by residues serine 21, 46 to 48, and arginine 82; that span reads EWR. Histidine 143 functions as the Proton donor/acceptor in the catalytic mechanism. Catalysis depends on lysine 170, which acts as the Schiff-base intermediate with substrate. Positions 213, 232, and 236 each coordinate 3-dehydroquinate.

It belongs to the type-I 3-dehydroquinase family. Homodimer.

The enzyme catalyses 3-dehydroquinate = 3-dehydroshikimate + H2O. It functions in the pathway metabolic intermediate biosynthesis; chorismate biosynthesis; chorismate from D-erythrose 4-phosphate and phosphoenolpyruvate: step 3/7. Functionally, involved in the third step of the chorismate pathway, which leads to the biosynthesis of aromatic amino acids. Catalyzes the cis-dehydration of 3-dehydroquinate (DHQ) and introduces the first double bond of the aromatic ring to yield 3-dehydroshikimate. The protein is 3-dehydroquinate dehydratase of Shigella flexneri serotype 5b (strain 8401).